The sequence spans 263 residues: Endonuclease 8 (263 aa).

P2 (schiff-base intermediate with DNA) is an active-site residue. E3 (proton donor) is an active-site residue. The active-site Proton donor; for beta-elimination activity is the K53. Positions 70, 125, and 169 each coordinate DNA. Residues 229–263 form an FPG-type zinc finger; the sequence is KVFHRDGEACERCGGIIEKTTLSSRPFYWCPHCQK. R253 functions as the Proton donor; for delta-elimination activity in the catalytic mechanism.

It belongs to the FPG family. The cofactor is Zn(2+).

The catalysed reaction is 2'-deoxyribonucleotide-(2'-deoxyribose 5'-phosphate)-2'-deoxyribonucleotide-DNA = a 3'-end 2'-deoxyribonucleotide-(2,3-dehydro-2,3-deoxyribose 5'-phosphate)-DNA + a 5'-end 5'-phospho-2'-deoxyribonucleoside-DNA + H(+). Involved in base excision repair of DNA damaged by oxidation or by mutagenic agents. Acts as a DNA glycosylase that recognizes and removes damaged bases. Has a preference for oxidized pyrimidines, such as thymine glycol, 5,6-dihydrouracil and 5,6-dihydrothymine. Has AP (apurinic/apyrimidinic) lyase activity and introduces nicks in the DNA strand. Cleaves the DNA backbone by beta-delta elimination to generate a single-strand break at the site of the removed base with both 3'- and 5'-phosphates. This is Endonuclease 8 from Salmonella dublin (strain CT_02021853).